We begin with the raw amino-acid sequence, 127 residues long: MAREFSRADRVAQELQKEIAIILQREVKDPRIGMVTVSDVEISRDLAYAKVFVTFLFDSDESAVERGLEGLNKASGYIRTLVGKAMRLRIVPELRFVYDQSLVEGMRMSNLVTNVIRKDQERYVEEE.

This sequence belongs to the RbfA family. Monomer. Binds 30S ribosomal subunits, but not 50S ribosomal subunits or 70S ribosomes.

The protein resides in the cytoplasm. In terms of biological role, one of several proteins that assist in the late maturation steps of the functional core of the 30S ribosomal subunit. Associates with free 30S ribosomal subunits (but not with 30S subunits that are part of 70S ribosomes or polysomes). Required for efficient processing of 16S rRNA. May interact with the 5'-terminal helix region of 16S rRNA. This chain is Ribosome-binding factor A, found in Glaesserella parasuis serovar 5 (strain SH0165) (Haemophilus parasuis).